The primary structure comprises 312 residues: Methionyl-tRNA formyltransferase (312 aa).

Position 111–114 (111–114 (SLLP)) interacts with (6S)-5,6,7,8-tetrahydrofolate.

The protein belongs to the Fmt family.

The catalysed reaction is L-methionyl-tRNA(fMet) + (6R)-10-formyltetrahydrofolate = N-formyl-L-methionyl-tRNA(fMet) + (6S)-5,6,7,8-tetrahydrofolate + H(+). Attaches a formyl group to the free amino group of methionyl-tRNA(fMet). The formyl group appears to play a dual role in the initiator identity of N-formylmethionyl-tRNA by promoting its recognition by IF2 and preventing the misappropriation of this tRNA by the elongation apparatus. The sequence is that of Methionyl-tRNA formyltransferase from Myxococcus xanthus (strain DK1622).